The sequence spans 530 residues: Phosphoenolpyruvate carboxykinase (ATP) (530 aa).

Residues Arg60, Tyr195, and Lys201 each contribute to the substrate site. ATP contacts are provided by residues Lys201, His221, and 237-245 (GLSGTGKTT). 2 residues coordinate Mn(2+): Lys201 and His221. Mn(2+) is bound at residue Asp258. Residues Glu286, Arg324, 443–444 (RI), and Ser449 each bind ATP. Arg324 lines the substrate pocket.

It belongs to the phosphoenolpyruvate carboxykinase (ATP) family. Mn(2+) serves as cofactor.

The protein resides in the cytoplasm. The enzyme catalyses oxaloacetate + ATP = phosphoenolpyruvate + ADP + CO2. Its pathway is carbohydrate biosynthesis; gluconeogenesis. Its function is as follows. Involved in the gluconeogenesis. Catalyzes the conversion of oxaloacetate (OAA) to phosphoenolpyruvate (PEP) through direct phosphoryl transfer between the nucleoside triphosphate and OAA. This chain is Phosphoenolpyruvate carboxykinase (ATP), found in Pelobacter propionicus (strain DSM 2379 / NBRC 103807 / OttBd1).